The primary structure comprises 1015 residues: Condensin complex subunit 3 (1015 aa).

HEAT repeat units follow at residues 94-131, 138-173, 174-212, 238-275, and 276-313; these read GLLN…SMPE, DVFD…QDPK, DDEC…TLPK, MRAM…GWLR, and FSEG…LSEL. Serine 390 bears the Phosphoserine mark. 3 HEAT repeats span residues 399-436, 439-478, and 617-654; these read EFIG…LPTI, SLVS…TVGV, and DFAR…TFGI. Phosphoserine is present on serine 674. 2 HEAT repeats span residues 687 to 724 and 865 to 907; these read ATAK…SGLL and KDLL…QAEA. Threonine 931 carries the phosphothreonine modification. Residues 941 to 950 are compositionally biased toward polar residues; it reads ASKSTQLKTN. Positions 941–994 are disordered; that stretch reads ASKSTQLKTNRGQRKVTVSARTNRRCQTAEADSESDHEVPEPESEMKMRLPRRA. Residues serine 973, serine 975, serine 1002, and serine 1015 each carry the phosphoserine modification. The span at 974–988 shows a compositional bias: basic and acidic residues; that stretch reads ESDHEVPEPESEMKM.

It belongs to the CND3 (condensin subunit 3) family. As to quaternary structure, component of the condensin complex, which contains the SMC2 and SMC4 heterodimer, and three non SMC subunits that probably regulate the complex: NCAPH/BRRN1, NCAPD2/CAPD2 and NCAPG. Post-translationally, phosphorylated by CDK1. Its phosphorylation, as well as that of NCAPD2 and NCAPH subunits, activates the condensin complex and is required for chromosome condensation. As to expression, highly expressed in testis.

It localises to the nucleus. It is found in the cytoplasm. The protein localises to the chromosome. Functionally, regulatory subunit of the condensin complex, a complex required for conversion of interphase chromatin into mitotic-like condense chromosomes. The condensin complex probably introduces positive supercoils into relaxed DNA in the presence of type I topoisomerases and converts nicked DNA into positive knotted forms in the presence of type II topoisomerases. This chain is Condensin complex subunit 3 (NCAPG), found in Homo sapiens (Human).